A 145-amino-acid polypeptide reads, in one-letter code: Ribosomal RNA large subunit methyltransferase H (145 aa).

S-adenosyl-L-methionine is bound by residues leucine 64, glycine 93, and 112 to 117; that span reads LSPLTF.

Belongs to the RNA methyltransferase RlmH family. As to quaternary structure, homodimer.

Its subcellular location is the cytoplasm. It catalyses the reaction pseudouridine(1915) in 23S rRNA + S-adenosyl-L-methionine = N(3)-methylpseudouridine(1915) in 23S rRNA + S-adenosyl-L-homocysteine + H(+). In terms of biological role, specifically methylates the pseudouridine at position 1915 (m3Psi1915) in 23S rRNA. This Prochlorococcus marinus (strain MIT 9211) protein is Ribosomal RNA large subunit methyltransferase H.